Reading from the N-terminus, the 426-residue chain is 3-phosphoshikimate 1-carboxyvinyltransferase (426 aa).

3-phosphoshikimate contacts are provided by lysine 20, serine 21, and arginine 25. Lysine 20 serves as a coordination point for phosphoenolpyruvate. Phosphoenolpyruvate is bound by residues glycine 92 and arginine 120. Residues serine 166, glutamine 168, aspartate 312, and lysine 339 each contribute to the 3-phosphoshikimate site. Glutamine 168 provides a ligand contact to phosphoenolpyruvate. Aspartate 312 (proton acceptor) is an active-site residue. Arginine 385 lines the phosphoenolpyruvate pocket.

Belongs to the EPSP synthase family. As to quaternary structure, monomer.

It localises to the cytoplasm. The catalysed reaction is 3-phosphoshikimate + phosphoenolpyruvate = 5-O-(1-carboxyvinyl)-3-phosphoshikimate + phosphate. It participates in metabolic intermediate biosynthesis; chorismate biosynthesis; chorismate from D-erythrose 4-phosphate and phosphoenolpyruvate: step 6/7. Catalyzes the transfer of the enolpyruvyl moiety of phosphoenolpyruvate (PEP) to the 5-hydroxyl of shikimate-3-phosphate (S3P) to produce enolpyruvyl shikimate-3-phosphate and inorganic phosphate. This Streptococcus suis (strain 98HAH33) protein is 3-phosphoshikimate 1-carboxyvinyltransferase.